The following is a 395-amino-acid chain: NAD(P)H-quinone oxidoreductase subunit H (395 aa).

The protein belongs to the complex I 49 kDa subunit family. As to quaternary structure, NDH-1 can be composed of about 15 different subunits; different subcomplexes with different compositions have been identified which probably have different functions.

The protein localises to the cellular thylakoid membrane. The enzyme catalyses a plastoquinone + NADH + (n+1) H(+)(in) = a plastoquinol + NAD(+) + n H(+)(out). The catalysed reaction is a plastoquinone + NADPH + (n+1) H(+)(in) = a plastoquinol + NADP(+) + n H(+)(out). In terms of biological role, NDH-1 shuttles electrons from an unknown electron donor, via FMN and iron-sulfur (Fe-S) centers, to quinones in the respiratory and/or the photosynthetic chain. The immediate electron acceptor for the enzyme in this species is believed to be plastoquinone. Couples the redox reaction to proton translocation, and thus conserves the redox energy in a proton gradient. Cyanobacterial NDH-1 also plays a role in inorganic carbon-concentration. This Prochlorococcus marinus (strain MIT 9312) protein is NAD(P)H-quinone oxidoreductase subunit H.